Consider the following 279-residue polypeptide: Zinc finger CCCH domain-containing protein 1 (279 aa).

Residues 20–45 (DVIVLSPGPPARRRPPPVKAVEPESG) are disordered. 2 C3H1-type zinc fingers span residues 56-84 (FYKT…HGDE) and 139-167 (RAIT…HVSA).

The protein is Zinc finger CCCH domain-containing protein 1 of Oryza sativa subsp. japonica (Rice).